The following is a 103-amino-acid chain: Secreted LysM effector Mgx1LysM (103 aa).

The first 18 residues, 1-18, serve as a signal peptide directing secretion; that stretch reads MKVTTIIAALLSVAVVDA. Cystine bridges form between Cys-31-Cys-89 and Cys-62-Cys-97. The 49-residue stretch at 37–85 folds into the LysM domain; that stretch reads IPYVVKKGDTLTHIAHDIYKRKVGICDLAYTNHIGYNPDLIYEDQTLLI. Chitin is bound by residues Gly-44, Thr-48, Asp-75, and Ile-77.

This sequence belongs to the secreted LysM effector family. As to quaternary structure, forms homodimers in a chitin-independent manner through interactions at the N-termini of Mgx1LysM monomers. Homodimers are further polymerized in a chitin-dependent manner.

It localises to the secreted. Its subcellular location is the cell wall. In terms of biological role, secreted effector that enables the plant pathogenic fungus to manipulate host defenses for successful infection. Binds chitin and suppresses the chitin-induced reactive oxygen species (ROS) burst. Chitin-induced polymerization of homodimers forms a contiguous Mg1LysM highly oligomeric super-complexe that is anchored to the chitin in the fungal cell wall to prevent hydrolysis by host chitinases. This Zymoseptoria tritici (strain CBS 115943 / IPO323) (Speckled leaf blotch fungus) protein is Secreted LysM effector Mgx1LysM.